A 355-amino-acid polypeptide reads, in one-letter code: MEGGSSGNTSTSCLMMMGYGDHENNNNNNGNGNGNGNGNVTICAPPMMMMMPPPPPSLTNNNNAETSNNNILFLPFMDNNNNNNPQEDNNSSSSSIKSKIMAHPHYHRLLTAYLNCQKIGAPPEVVARLEEICATSATMGRSSSSSGGGIIGEDPALDQFMEAYCEMLTKYEQELSKPFKEAMVFLSRIECQFKALTLAPNSSHESALGEAMDRNGSSDEEVDVNNSFIDPQAEDRELKGQLLRKYSGYLGSLKQEFMKKRKKGKLPKEARQQLVDWWLRHIKWPYPSESQKLALAESTGLDQKQINNWFINQRKRHWKPSEDMQFVVMDAAHPHYYMDNVLANHFPMDMTPSLL.

The interval 75 to 96 (PFMDNNNNNNPQEDNNSSSSSI) is disordered. Over residues 79-96 (NNNNNNPQEDNNSSSSSI) the composition is skewed to low complexity. The ELK domain maps to 237–257 (ELKGQLLRKYSGYLGSLKQEF). Residues 258-321 (MKKRKKGKLP…NQRKRHWKPS (64 aa)) constitute a DNA-binding region (homeobox; TALE-type).

It belongs to the TALE/KNOX homeobox family. As to expression, expressed in developing lateral organs and developing ovaries in flowers.

Its subcellular location is the nucleus. Functionally, may have a role to play in formative events in ovule and embryo morphogenesis. Probably binds to the DNA sequence 5'-TGAC-3'. The sequence is that of Homeobox protein knotted-1-like LET6 (LET6) from Solanum lycopersicum (Tomato).